The chain runs to 468 residues: Chitoporin (468 aa).

An N-terminal signal peptide occupies residues 1-32 (MRTFSGKRSTLALAIAGVTAMSGFMAMPEARA).

Belongs to the outer membrane porin (Opr) (TC 1.B.25) family.

The protein resides in the cell outer membrane. Its function is as follows. Involved in the uptake of chitosugars. The protein is Chitoporin (chiP) of Escherichia coli (strain K12).